The chain runs to 279 residues: Large ribosomal subunit protein uL2 (279 aa).

The interval 223–279 is disordered; it reads MAMNPVDHPMGGGEGKSKSGGGRKHPKSPWGQLAKGLKTRNKKKASTKLIVRGRKAK. Residues 232 to 242 show a composition bias toward gly residues; that stretch reads MGGGEGKSKSG. Over residues 259 to 279 the composition is skewed to basic residues; that stretch reads LKTRNKKKASTKLIVRGRKAK.

The protein belongs to the universal ribosomal protein uL2 family. In terms of assembly, part of the 50S ribosomal subunit. Forms a bridge to the 30S subunit in the 70S ribosome.

Its function is as follows. One of the primary rRNA binding proteins. Required for association of the 30S and 50S subunits to form the 70S ribosome, for tRNA binding and peptide bond formation. It has been suggested to have peptidyltransferase activity; this is somewhat controversial. Makes several contacts with the 16S rRNA in the 70S ribosome. The polypeptide is Large ribosomal subunit protein uL2 (Chlorobaculum tepidum (strain ATCC 49652 / DSM 12025 / NBRC 103806 / TLS) (Chlorobium tepidum)).